Reading from the N-terminus, the 480-residue chain is 2-phosphoxylose phosphatase 1 (480 aa).

Residues 1–6 are Cytoplasmic-facing; that stretch reads MLFRNR. A helical; Signal-anchor for type II membrane protein membrane pass occupies residues 7-27; the sequence is FLLLLALAALLAFVSLSLQFF. The Lumenal segment spans residues 28 to 480; it reads HLIPVSTPKN…YYDACHREGF (453 aa). His-97 (nucleophile) is an active-site residue. N-linked (GlcNAc...) asparagine glycans are attached at residues Asn-305 and Asn-354. Asp-379 serves as the catalytic Proton donor.

This sequence belongs to the histidine acid phosphatase family. In terms of assembly, interacts with B3GAT3; the interaction increases the 2-phosphoxylose phosphatase activity of PXYLP1 during completion of linkage region formation in a B3GAT3-mediated manner. As to expression, widely expressed. Strongly expressed in spleen, fetal liver, moderately in placenta, pancreas, kidney, thymus and colon.

It localises to the golgi apparatus membrane. It carries out the reaction 3-O-[beta-D-GlcA-(1-&gt;3)-beta-D-Gal-(1-&gt;3)-beta-D-Gal-(1-&gt;4)-beta-D-2-O-P-Xyl]-L-seryl-[protein] + H2O = 3-O-(beta-D-GlcA-(1-&gt;3)-beta-D-Gal-(1-&gt;3)-beta-D-Gal-(1-&gt;4)-beta-D-Xyl)-L-seryl-[protein] + phosphate. Functionally, responsible for the 2-O-dephosphorylation of xylose in the glycosaminoglycan-protein linkage region of proteoglycans thereby regulating the amount of mature glycosaminoglycan (GAG) chains. Sulfated glycosaminoglycans (GAGs), including heparan sulfate and chondroitin sulfate, are synthesized on the so-called common GAG-protein linkage region (GlcUAbeta1-3Galbeta1-3Galbeta1-4Xylbeta1-O-Ser) of core proteins, which is formed by the stepwise addition of monosaccharide residues by the respective specific glycosyltransferases. Xylose 2-O-dephosphorylation during completion of linkage region formation is a prerequisite for the initiation and efficient elongation of the repeating disaccharide region of GAG chains. The protein is 2-phosphoxylose phosphatase 1 of Homo sapiens (Human).